The following is a 198-amino-acid chain: MPNVSLTAKGGGHYIEDQWDTQVVEAGVFDDWWVHVEAWNKFLDNLRGINFSVASSRSQVAEYLAALDRDLPADVDRRFAGARGQIGSPNYLPAPKFFRLDKRTIAELTRLSRLTDQPHNNRDIELNRAKRATTNPSPPAQAPSENLTLRDVQPLKDSALHYQYVLIDLQSARLPVYTRKTFERELALEWIIPDAEEA.

Positions Q117–L147 are disordered. Residues H119–R128 are compositionally biased toward basic and acidic residues.

This sequence belongs to the virgaviridae capsid protein family. Interacts with itself.

The protein resides in the virion. In terms of biological role, capsid protein self-assembles to form rod-shaped virions about 21,6 nm in diameter for the narrow nes and 22,4 for the wide ones, and 110-150 nm in length depending on the size of the encapsidated RNA. They display a helical symmetry of 23.2 subunits per turn of the viral helix and with a central canal enclosing the viral genomic RNA. The chain is Capsid protein from Barley stripe mosaic virus (BSMV).